The following is a 185-amino-acid chain: V-type proton ATPase subunit E (185 aa).

This sequence belongs to the V-ATPase E subunit family.

Produces ATP from ADP in the presence of a proton gradient across the membrane. The protein is V-type proton ATPase subunit E of Deinococcus deserti (strain DSM 17065 / CIP 109153 / LMG 22923 / VCD115).